The chain runs to 586 residues: Arginine--tRNA ligase (586 aa).

Residues 130–140 (ANPTGPMHVGH) carry the 'HIGH' region motif.

The protein belongs to the class-I aminoacyl-tRNA synthetase family. Monomer.

Its subcellular location is the cytoplasm. The enzyme catalyses tRNA(Arg) + L-arginine + ATP = L-arginyl-tRNA(Arg) + AMP + diphosphate. This is Arginine--tRNA ligase from Methylobacterium sp. (strain 4-46).